We begin with the raw amino-acid sequence, 147 residues long: Large ribosomal subunit protein bL9 (147 aa).

The protein belongs to the bacterial ribosomal protein bL9 family.

In terms of biological role, binds to the 23S rRNA. The sequence is that of Large ribosomal subunit protein bL9 from Mycoplasmoides gallisepticum (strain R(low / passage 15 / clone 2)) (Mycoplasma gallisepticum).